Here is a 743-residue protein sequence, read N- to C-terminus: Serine/threonine-protein kinase GD17699 (743 aa).

Residues 54–78 (NVQEDNSYNRDCDSPVSSSSEPEKE) form a disordered region. Doublecortin domains are found at residues 154–240 (LRIK…VEYN) and 309–392 (RIVT…AEDF). The region spanning 473–731 (YTLGRIIGDG…SEDILDHPWT (259 aa)) is the Protein kinase domain. Residues 479–487 (IGDGNFAIV) and Lys502 each bind ATP. Asp594 (proton acceptor) is an active-site residue.

It belongs to the protein kinase superfamily. CAMK Ser/Thr protein kinase family. CaMK subfamily.

The catalysed reaction is L-seryl-[protein] + ATP = O-phospho-L-seryl-[protein] + ADP + H(+). It catalyses the reaction L-threonyl-[protein] + ATP = O-phospho-L-threonyl-[protein] + ADP + H(+). The chain is Serine/threonine-protein kinase GD17699 from Drosophila simulans (Fruit fly).